Consider the following 291-residue polypeptide: tRNA dimethylallyltransferase (291 aa).

9–16 (GTTASGKT) is an ATP binding site. 11–16 (TASGKT) provides a ligand contact to substrate. Residues 34-37 (DSLC) are interaction with substrate tRNA.

It belongs to the IPP transferase family. In terms of assembly, monomer. It depends on Mg(2+) as a cofactor.

The catalysed reaction is adenosine(37) in tRNA + dimethylallyl diphosphate = N(6)-dimethylallyladenosine(37) in tRNA + diphosphate. Functionally, catalyzes the transfer of a dimethylallyl group onto the adenine at position 37 in tRNAs that read codons beginning with uridine, leading to the formation of N6-(dimethylallyl)adenosine (i(6)A). In Campylobacter lari (strain RM2100 / D67 / ATCC BAA-1060), this protein is tRNA dimethylallyltransferase.